We begin with the raw amino-acid sequence, 404 residues long: Multidrug resistance protein MdtG (404 aa).

Transmembrane regions (helical) follow at residues 19–39 (LGCF…PLYV), 56–76 (LVFS…GGLA), 90–110 (LGMA…QFLI), 113–133 (ALLG…ATQA), 144–164 (TLST…GLLA), 171–191 (PVFF…FFFI), 222–242 (LFVT…ILTL), 254–274 (IAFI…LSAP), 288–308 (ILIV…FVQT), 317–337 (FLLG…LVYN), and 376–396 (AVFC…WNSL).

Belongs to the major facilitator superfamily. DHA1 family. MdtG (TC 2.A.1.2.20) subfamily.

It is found in the cell inner membrane. The polypeptide is Multidrug resistance protein MdtG (Salmonella paratyphi A (strain ATCC 9150 / SARB42)).